A 223-amino-acid chain; its full sequence is uncharacterized protein (223 aa).

The HTH tetR-type domain occupies 11 to 71 (EATFESFIDA…YLLEKRQMKK (61 aa)). The H-T-H motif DNA-binding region spans 34 to 53 (SVEDISRAAGYSKGAFYVHF).

This is an uncharacterized protein from Bacillus subtilis (strain 168).